The sequence spans 283 residues: Diaminopimelate epimerase (283 aa).

Asparagine 13 and asparagine 65 together coordinate substrate. The active-site Proton donor is cysteine 74. Substrate-binding positions include 75 to 76 (GN), asparagine 196, and 214 to 215 (ER). Residue cysteine 223 is the Proton acceptor of the active site. 224 to 225 (GT) provides a ligand contact to substrate.

It belongs to the diaminopimelate epimerase family. As to quaternary structure, homodimer.

The protein localises to the cytoplasm. It catalyses the reaction (2S,6S)-2,6-diaminopimelate = meso-2,6-diaminopimelate. Its pathway is amino-acid biosynthesis; L-lysine biosynthesis via DAP pathway; DL-2,6-diaminopimelate from LL-2,6-diaminopimelate: step 1/1. In terms of biological role, catalyzes the stereoinversion of LL-2,6-diaminopimelate (L,L-DAP) to meso-diaminopimelate (meso-DAP), a precursor of L-lysine and an essential component of the bacterial peptidoglycan. This is Diaminopimelate epimerase from Alkaliphilus metalliredigens (strain QYMF).